Reading from the N-terminus, the 37-residue chain is Putative preoptic regulatory factor 1 (37 aa).

2 propeptides span residues 1–7 (MPYSLQP) and 18–37 (FPLCMYMVRGSTWTLVPPDL).

It belongs to the GnRH family. Preoptic area and testis.

The protein localises to the secreted. Its function is as follows. Precursor for a gonadotropin regulatory hormone (GNRH) related decapeptide. The chain is Putative preoptic regulatory factor 1 (Porf1) from Rattus norvegicus (Rat).